A 320-amino-acid chain; its full sequence is Ribosomal RNA large subunit methyltransferase F (320 aa).

Residues Met-1–Asn-20 are disordered.

The protein belongs to the methyltransferase superfamily. METTL16/RlmF family.

It is found in the cytoplasm. It carries out the reaction adenosine(1618) in 23S rRNA + S-adenosyl-L-methionine = N(6)-methyladenosine(1618) in 23S rRNA + S-adenosyl-L-homocysteine + H(+). Its function is as follows. Specifically methylates the adenine in position 1618 of 23S rRNA. This is Ribosomal RNA large subunit methyltransferase F from Saccharophagus degradans (strain 2-40 / ATCC 43961 / DSM 17024).